The sequence spans 200 residues: Holliday junction branch migration complex subunit RuvA (200 aa).

Positions 1–63 are domain I; sequence MIALLTGQIA…EDAILLYGFR (63 aa). The segment at 64-142 is domain II; it reads TRTEKSFFQL…KLDSGSIPAG (79 aa). Residues 143–153 form a flexible linker region; the sequence is DAVGRSLPAGS. The segment at 153 to 200 is domain III; the sequence is SVLDDVSSALVNLGYKDPQVRKVLAELDCAGSASVEEVLKQALKILMK.

The protein belongs to the RuvA family. In terms of assembly, homotetramer. Forms an RuvA(8)-RuvB(12)-Holliday junction (HJ) complex. HJ DNA is sandwiched between 2 RuvA tetramers; dsDNA enters through RuvA and exits via RuvB. An RuvB hexamer assembles on each DNA strand where it exits the tetramer. Each RuvB hexamer is contacted by two RuvA subunits (via domain III) on 2 adjacent RuvB subunits; this complex drives branch migration. In the full resolvosome a probable DNA-RuvA(4)-RuvB(12)-RuvC(2) complex forms which resolves the HJ.

It is found in the cytoplasm. In terms of biological role, the RuvA-RuvB-RuvC complex processes Holliday junction (HJ) DNA during genetic recombination and DNA repair, while the RuvA-RuvB complex plays an important role in the rescue of blocked DNA replication forks via replication fork reversal (RFR). RuvA specifically binds to HJ cruciform DNA, conferring on it an open structure. The RuvB hexamer acts as an ATP-dependent pump, pulling dsDNA into and through the RuvAB complex. HJ branch migration allows RuvC to scan DNA until it finds its consensus sequence, where it cleaves and resolves the cruciform DNA. The polypeptide is Holliday junction branch migration complex subunit RuvA (Trichlorobacter lovleyi (strain ATCC BAA-1151 / DSM 17278 / SZ) (Geobacter lovleyi)).